The primary structure comprises 313 residues: Trimeric intracellular cation channel type 1B.2 (313 aa).

Over 1-28 (MGWVPDEWSIDHDTLIDAGGYVQKLKLY) the chain is Lumenal. The chain crosses the membrane as a helical span at residues 29-48 (PYFDAAHYVLTCLSVRHDLG). Residues 49-57 (PDAISFSRK) are Cytoplasmic-facing. Residues 58 to 82 (HPFSCWLSCMLMSFAGSFLSCFLLG) form a discontinuously helical membrane-spanning segment. The Lumenal portion of the chain corresponds to 83–90 (EPIISPLK). A helical transmembrane segment spans residues 91–108 (QHADILLGSIVWYLVFYS). Residues 109–118 (PFDVVFRLAT) are Cytoplasmic-facing. The helical transmembrane segment at 119–149 (WFPVKLGLSVLKEVQRTHKIAAGVKHAVRIY) threads the bilayer. A 1,2-diacyl-sn-glycero-3-phospho-(1D-myo-inositol-4,5-bisphosphate) contacts are provided by K130 and R134. The Lumenal segment spans residues 150–151 (PE). Residues 152 to 178 (SYLVQILVGVAKGAGSGVVKIVEQLAR) traverse the membrane as a discontinuously helical segment. A 1,2-diacyl-sn-glycero-3-phospho-(1D-myo-inositol-4,5-bisphosphate) is bound at residue G168. The Cytoplasmic portion of the chain corresponds to 179–192 (GTWHPTNHEILRPS). Residues 193-210 (FTTKACVIASIVFTLERH) form a helical membrane-spanning segment. The Lumenal segment spans residues 211–216 (SMYVTA). A helical transmembrane segment spans residues 217–239 (PHDLVYLCVVGFFIYFKLASLCL). Topologically, residues 240–313 (SVHDVLMPIE…MSNGTDKKNN (74 aa)) are cytoplasmic.

It belongs to the TMEM38 family. Homotrimer; trimerization probably requires binding to phosphatidylinositol 4,5-bisphosphate (PIP2).

The protein resides in the endoplasmic reticulum membrane. Potassium channel that mediates transmembrane potassium transport. Might be required for maintenance of rapid intracellular calcium release. May act as a potassium counter-ion channel that functions in synchronization with calcium release from intracellular stores. Binds phosphatidylinositol 4,5-bisphosphate (PIP2). This chain is Trimeric intracellular cation channel type 1B.2, found in Caenorhabditis elegans.